We begin with the raw amino-acid sequence, 107 residues long: Cytochrome c2 (107 aa).

Position 1 is a pyrrolidone carboxylic acid (Gln-1). Cys-13, Cys-16, His-17, and Met-79 together coordinate heme c.

Belongs to the cytochrome c family. Binds 1 heme c group covalently per subunit.

It is found in the periplasm. Its function is as follows. Cytochrome c2 is found mainly in purple, non-sulfur, photosynthetic bacteria where it functions as the electron donor to the oxidized bacteriochlorophyll in the photophosphorylation pathway. However, it may also have a role in the respiratory chain and is found in some non-photosynthetic bacteria. This chain is Cytochrome c2, found in Rhodoplanes tepidamans (Rhodoplanes cryptolactis).